The chain runs to 264 residues: Thymidylate synthase (264 aa).

Arg-21 is a binding site for dUMP. Position 51 (His-51) interacts with (6R)-5,10-methylene-5,6,7,8-tetrahydrofolate. A dUMP-binding site is contributed by 126-127; the sequence is RR. The active-site Nucleophile is the Cys-146. DUMP is bound by residues 166-169, Asn-177, and 207-209; these read RSAD and HLY. Asp-169 is a binding site for (6R)-5,10-methylene-5,6,7,8-tetrahydrofolate. Ser-263 is a (6R)-5,10-methylene-5,6,7,8-tetrahydrofolate binding site.

It belongs to the thymidylate synthase family. Bacterial-type ThyA subfamily. As to quaternary structure, homodimer.

It is found in the cytoplasm. It catalyses the reaction dUMP + (6R)-5,10-methylene-5,6,7,8-tetrahydrofolate = 7,8-dihydrofolate + dTMP. Its pathway is pyrimidine metabolism; dTTP biosynthesis. Functionally, catalyzes the reductive methylation of 2'-deoxyuridine-5'-monophosphate (dUMP) to 2'-deoxythymidine-5'-monophosphate (dTMP) while utilizing 5,10-methylenetetrahydrofolate (mTHF) as the methyl donor and reductant in the reaction, yielding dihydrofolate (DHF) as a by-product. This enzymatic reaction provides an intracellular de novo source of dTMP, an essential precursor for DNA biosynthesis. The sequence is that of Thymidylate synthase from Laribacter hongkongensis (strain HLHK9).